The chain runs to 305 residues: Glycine--tRNA ligase alpha subunit (305 aa).

The protein belongs to the class-II aminoacyl-tRNA synthetase family. As to quaternary structure, tetramer of two alpha and two beta subunits.

The protein localises to the cytoplasm. It catalyses the reaction tRNA(Gly) + glycine + ATP = glycyl-tRNA(Gly) + AMP + diphosphate. This is Glycine--tRNA ligase alpha subunit from Streptococcus pyogenes serotype M49 (strain NZ131).